The following is a 117-amino-acid chain: Non-specific lipid-transfer protein (117 aa).

The signal sequence occupies residues 1–26; that stretch reads MACSAMTKLALVVALCMVVSVPIAQA. Cystine bridges form between Cys29–Cys76, Cys39–Cys53, Cys54–Cys99, and Cys74–Cys113.

It belongs to the plant LTP family.

Plant non-specific lipid-transfer proteins transfer phospholipids as well as galactolipids across membranes. May play a role in wax or cutin deposition in the cell walls of expanding epidermal cells and certain secretory tissues. The polypeptide is Non-specific lipid-transfer protein (Prunus avium (Cherry)).